Consider the following 248-residue polypeptide: Ubiquinone biosynthesis O-methyltransferase (248 aa).

S-adenosyl-L-methionine-binding residues include Arg-41, Gly-72, Asp-93, and Met-136.

This sequence belongs to the methyltransferase superfamily. UbiG/COQ3 family.

It carries out the reaction a 3-demethylubiquinol + S-adenosyl-L-methionine = a ubiquinol + S-adenosyl-L-homocysteine + H(+). The enzyme catalyses a 3-(all-trans-polyprenyl)benzene-1,2-diol + S-adenosyl-L-methionine = a 2-methoxy-6-(all-trans-polyprenyl)phenol + S-adenosyl-L-homocysteine + H(+). Its pathway is cofactor biosynthesis; ubiquinone biosynthesis. Functionally, O-methyltransferase that catalyzes the 2 O-methylation steps in the ubiquinone biosynthetic pathway. This chain is Ubiquinone biosynthesis O-methyltransferase, found in Bartonella bacilliformis (strain ATCC 35685 / KC583 / Herrer 020/F12,63).